The chain runs to 147 residues: Large ribosomal subunit protein uL15 (147 aa).

Basic and acidic residues predominate over residues 1–13; that stretch reads MRLHDLKPAEGAR. The disordered stretch occupies residues 1–58; sequence MRLHDLKPAEGARRERKRVGRGIGSGHGKTSGRGQKGQKARSGGGVRPGFEGGQMPLT. 2 stretches are compositionally biased toward gly residues: residues 21–35 and 42–52; these read RGIGSGHGKTSGRGQ and SGGGVRPGFEG.

It belongs to the universal ribosomal protein uL15 family. Part of the 50S ribosomal subunit.

Functionally, binds to the 23S rRNA. The chain is Large ribosomal subunit protein uL15 from Thermoanaerobacter sp. (strain X514).